A 100-amino-acid polypeptide reads, in one-letter code: Urease subunit gamma (100 aa).

It belongs to the urease gamma subunit family. As to quaternary structure, heterotrimer of UreA (gamma), UreB (beta) and UreC (alpha) subunits. Three heterotrimers associate to form the active enzyme.

The protein localises to the cytoplasm. The catalysed reaction is urea + 2 H2O + H(+) = hydrogencarbonate + 2 NH4(+). The protein operates within nitrogen metabolism; urea degradation; CO(2) and NH(3) from urea (urease route): step 1/1. This Corynebacterium efficiens (strain DSM 44549 / YS-314 / AJ 12310 / JCM 11189 / NBRC 100395) protein is Urease subunit gamma.